Reading from the N-terminus, the 179-residue chain is Cytochrome b6-f complex iron-sulfur subunit (179 aa).

Residues 21 to 43 (LLTFGTVTGVALGALYPVVKYFI) traverse the membrane as a helical segment. Residues 61–162 (GNDVSLSKFL…ANTVDDKIIL (102 aa)) enclose the Rieske domain. Positions 108, 110, 126, and 129 each coordinate [2Fe-2S] cluster. Cys-113 and Cys-128 are joined by a disulfide.

Belongs to the Rieske iron-sulfur protein family. As to quaternary structure, the 4 large subunits of the cytochrome b6-f complex are cytochrome b6, subunit IV (17 kDa polypeptide, PetD), cytochrome f and the Rieske protein, while the 4 small subunits are PetG, PetL, PetM and PetN. The complex functions as a dimer. The cofactor is [2Fe-2S] cluster.

The protein localises to the cellular thylakoid membrane. It carries out the reaction 2 oxidized [plastocyanin] + a plastoquinol + 2 H(+)(in) = 2 reduced [plastocyanin] + a plastoquinone + 4 H(+)(out). Component of the cytochrome b6-f complex, which mediates electron transfer between photosystem II (PSII) and photosystem I (PSI), cyclic electron flow around PSI, and state transitions. This chain is Cytochrome b6-f complex iron-sulfur subunit, found in Desmonostoc sp. (strain PCC 7906) (Nostoc sp. (strain PCC 7906)).